The chain runs to 363 residues: Pyrimidine monooxygenase RutA (363 aa).

Residues isoleucine 49–lysine 50, asparagine 115, glutamate 124, arginine 140–tyrosine 141, and serine 190 each bind FMN.

The protein belongs to the NtaA/SnaA/DszA monooxygenase family. RutA subfamily.

The enzyme catalyses uracil + FMNH2 + NADH + O2 = (Z)-3-ureidoacrylate + FMN + NAD(+) + H2O + H(+). The catalysed reaction is thymine + FMNH2 + NADH + O2 = (Z)-2-methylureidoacrylate + FMN + NAD(+) + H2O + H(+). Catalyzes the pyrimidine ring opening between N-3 and C-4 by an unusual flavin hydroperoxide-catalyzed mechanism, adding oxygen atoms in the process to yield ureidoacrylate peracid, that immediately reacts with FMN forming ureidoacrylate and FMN-N(5)-oxide. The FMN-N(5)-oxide reacts spontaneously with NADH to produce FMN. Requires the flavin reductase RutF to regenerate FMN in vivo. The sequence is that of Pyrimidine monooxygenase RutA from Escherichia coli O127:H6 (strain E2348/69 / EPEC).